Consider the following 267-residue polypeptide: tRNA pseudouridine synthase A (267 aa).

Residue aspartate 53 is the Nucleophile of the active site. Position 114 (tyrosine 114) interacts with substrate.

The protein belongs to the tRNA pseudouridine synthase TruA family. As to quaternary structure, homodimer.

It carries out the reaction uridine(38/39/40) in tRNA = pseudouridine(38/39/40) in tRNA. Formation of pseudouridine at positions 38, 39 and 40 in the anticodon stem and loop of transfer RNAs. This is tRNA pseudouridine synthase A from Chlamydia muridarum (strain MoPn / Nigg).